The sequence spans 366 residues: Mitochondrial division protein fszB (366 aa).

GTP contacts are provided by residues 70-74 (GGGGN), 157-159 (GTG), glutamate 190, and aspartate 238.

It belongs to the FtsZ family.

The protein localises to the mitochondrion. In terms of biological role, probably involved in mitochondrion division process. Binds to and hydrolyzes GTP. This is Mitochondrial division protein fszB (fszB) from Dictyostelium discoideum (Social amoeba).